We begin with the raw amino-acid sequence, 221 residues long: Orotidine 5'-phosphate decarboxylase (221 aa).

Substrate-binding positions include D12, K34, 60–69 (DFKVADIPNT), S117, 170–180 (PGVGAQGGKAS), G193, and R194. The active-site Proton donor is the K62.

It belongs to the OMP decarboxylase family. Type 1 subfamily. Homodimer.

It carries out the reaction orotidine 5'-phosphate + H(+) = UMP + CO2. The protein operates within pyrimidine metabolism; UMP biosynthesis via de novo pathway; UMP from orotate: step 2/2. In terms of biological role, catalyzes the decarboxylation of orotidine 5'-monophosphate (OMP) to uridine 5'-monophosphate (UMP). The chain is Orotidine 5'-phosphate decarboxylase from Methanosarcina acetivorans (strain ATCC 35395 / DSM 2834 / JCM 12185 / C2A).